The primary structure comprises 283 residues: Pantothenate synthetase (283 aa).

30 to 37 (MGNLHDGH) provides a ligand contact to ATP. His37 serves as the catalytic Proton donor. Gln61 serves as a coordination point for (R)-pantoate. Gln61 is a beta-alanine binding site. Residue 149-152 (GEKD) participates in ATP binding. Gln155 contacts (R)-pantoate. Residue 186–189 (LSSR) participates in ATP binding.

Belongs to the pantothenate synthetase family. As to quaternary structure, homodimer.

The protein resides in the cytoplasm. The enzyme catalyses (R)-pantoate + beta-alanine + ATP = (R)-pantothenate + AMP + diphosphate + H(+). Its pathway is cofactor biosynthesis; (R)-pantothenate biosynthesis; (R)-pantothenate from (R)-pantoate and beta-alanine: step 1/1. Catalyzes the condensation of pantoate with beta-alanine in an ATP-dependent reaction via a pantoyl-adenylate intermediate. This is Pantothenate synthetase from Escherichia coli (strain SMS-3-5 / SECEC).